Here is a 1024-residue protein sequence, read N- to C-terminus: DNA-directed RNA polymerase subunit beta (1024 aa).

Belongs to the RNA polymerase beta chain family. In terms of assembly, in plastids the minimal PEP RNA polymerase catalytic core is composed of four subunits: alpha, beta, beta', and beta''. When a (nuclear-encoded) sigma factor is associated with the core the holoenzyme is formed, which can initiate transcription (Potential).

It is found in the plastid. It localises to the apicoplast. The catalysed reaction is RNA(n) + a ribonucleoside 5'-triphosphate = RNA(n+1) + diphosphate. Functionally, DNA-dependent RNA polymerase catalyzes the transcription of DNA into RNA using the four ribonucleoside triphosphates as substrates. This Plasmodium falciparum (isolate 3D7) protein is DNA-directed RNA polymerase subunit beta (rpoB).